Consider the following 191-residue polypeptide: Fe/S biogenesis protein NfuA (191 aa).

[4Fe-4S] cluster contacts are provided by Cys149 and Cys152.

It belongs to the NfuA family. As to quaternary structure, homodimer. [4Fe-4S] cluster is required as a cofactor.

Functionally, involved in iron-sulfur cluster biogenesis. Binds a 4Fe-4S cluster, can transfer this cluster to apoproteins, and thereby intervenes in the maturation of Fe/S proteins. Could also act as a scaffold/chaperone for damaged Fe/S proteins. This is Fe/S biogenesis protein NfuA from Enterobacter sp. (strain 638).